We begin with the raw amino-acid sequence, 256 residues long: uncharacterized protein (256 aa).

The next 7 membrane-spanning stretches (helical) occupy residues 32–52 (ILASIFIGFGITAASKTGSYF), 59–79 (FAFPAAAVTFGAAILMIAYGG), 112–132 (YAGNLIGAILFAILISATGLF), 156–176 (LFFRGMLCNWLVCLAFFIPMS), 184–204 (LFTMMLFVFCFFISGFEHSIA), 207–227 (CTFAISLLIEHPDTVTLMGAV), and 230–250 (LIPVTLGNLTAGIVMMGWMYY).

This sequence belongs to the FNT transporter (TC 1.A.16) family.

The protein resides in the cell membrane. This is an uncharacterized protein from Bacillus subtilis (strain 168).